Consider the following 42-residue polypeptide: Hemoglobin subunit beta-A (42 aa).

The Globin domain maps to 2-42; it reads EWTDAERSAILSLWGKIDTDELGPALLARLXLVXXXTQRYF.

The protein belongs to the globin family. Heterotetramer of two alpha chains and two beta chains. In terms of tissue distribution, red blood cells.

Its function is as follows. Involved in oxygen transport from gills to the various peripheral tissues. The protein is Hemoglobin subunit beta-A of Catostomus clarkii (Desert sucker).